We begin with the raw amino-acid sequence, 222 residues long: Protein GrpE (222 aa).

Belongs to the GrpE family. In terms of assembly, homodimer.

The protein resides in the cytoplasm. Its function is as follows. Participates actively in the response to hyperosmotic and heat shock by preventing the aggregation of stress-denatured proteins, in association with DnaK and GrpE. It is the nucleotide exchange factor for DnaK and may function as a thermosensor. Unfolded proteins bind initially to DnaJ; upon interaction with the DnaJ-bound protein, DnaK hydrolyzes its bound ATP, resulting in the formation of a stable complex. GrpE releases ADP from DnaK; ATP binding to DnaK triggers the release of the substrate protein, thus completing the reaction cycle. Several rounds of ATP-dependent interactions between DnaJ, DnaK and GrpE are required for fully efficient folding. The polypeptide is Protein GrpE (Bartonella bacilliformis (strain ATCC 35685 / KC583 / Herrer 020/F12,63)).